An 858-amino-acid polypeptide reads, in one-letter code: Gamma-secretase-activating protein (858 aa).

The protein belongs to the GSAP family. As to quaternary structure, interacts with APP; specifically interacts with the CTF-alpha product of APP. Interacts with the gamma-secretase complex. Post-translationally, the protein is first synthesized as a holoprotein form of 98 kDa and rapidly processed into the gamma-secretase-activating protein 16 kDa C-terminal form, which constitutes the predominant form.

It localises to the golgi apparatus. The protein localises to the trans-Golgi network. In terms of biological role, regulator of gamma-secretase activity, which specifically activates the production of amyloid-beta protein (amyloid-beta protein 40 and amyloid-beta protein 42), without affecting the cleavage of other gamma-secretase targets such has Notch. The gamma-secretase complex is an endoprotease complex that catalyzes the intramembrane cleavage of integral membrane proteins such as Notch receptors and APP (amyloid-beta precursor protein). Specifically promotes the gamma-cleavage of APP CTF-alpha (also named APP-CTF) by the gamma-secretase complex to generate amyloid-beta, while it reduces the epsilon-cleavage of APP CTF-alpha, leading to a low production of AICD. The protein is Gamma-secretase-activating protein (Gsap) of Mus musculus (Mouse).